Consider the following 315-residue polypeptide: Holliday junction branch migration complex subunit RuvB (315 aa).

Residues 1-168 are large ATPase domain (RuvB-L); that stretch reads MAKKQEIRPK…FGLIGQISNY (168 aa). ATP-binding positions include I7, R8, G49, K52, T53, S54, 115 to 117, R158, Y168, and R205; that span reads EDF. Residue T53 participates in Mg(2+) binding. The interval 169 to 239 is small ATPAse domain (RuvB-S); that stretch reads QVEDIEKIIK…LVNKTLKQLG (71 aa). A head domain (RuvB-H) region spans residues 242-315; that stretch reads ENGLNESQVK…QKGISYLERI (74 aa). Residues K297 and R302 each contribute to the DNA site.

This sequence belongs to the RuvB family. In terms of assembly, homohexamer. Forms an RuvA(8)-RuvB(12)-Holliday junction (HJ) complex. HJ DNA is sandwiched between 2 RuvA tetramers; dsDNA enters through RuvA and exits via RuvB. An RuvB hexamer assembles on each DNA strand where it exits the tetramer. Each RuvB hexamer is contacted by two RuvA subunits (via domain III) on 2 adjacent RuvB subunits; this complex drives branch migration. In the full resolvosome a probable DNA-RuvA(4)-RuvB(12)-RuvC(2) complex forms which resolves the HJ.

Its subcellular location is the cytoplasm. The enzyme catalyses ATP + H2O = ADP + phosphate + H(+). Functionally, the RuvA-RuvB-RuvC complex processes Holliday junction (HJ) DNA during genetic recombination and DNA repair, while the RuvA-RuvB complex plays an important role in the rescue of blocked DNA replication forks via replication fork reversal (RFR). RuvA specifically binds to HJ cruciform DNA, conferring on it an open structure. The RuvB hexamer acts as an ATP-dependent pump, pulling dsDNA into and through the RuvAB complex. RuvB forms 2 homohexamers on either side of HJ DNA bound by 1 or 2 RuvA tetramers; 4 subunits per hexamer contact DNA at a time. Coordinated motions by a converter formed by DNA-disengaged RuvB subunits stimulates ATP hydrolysis and nucleotide exchange. Immobilization of the converter enables RuvB to convert the ATP-contained energy into a lever motion, pulling 2 nucleotides of DNA out of the RuvA tetramer per ATP hydrolyzed, thus driving DNA branch migration. The RuvB motors rotate together with the DNA substrate, which together with the progressing nucleotide cycle form the mechanistic basis for DNA recombination by continuous HJ branch migration. Branch migration allows RuvC to scan DNA until it finds its consensus sequence, where it cleaves and resolves cruciform DNA. This is Holliday junction branch migration complex subunit RuvB from Mycoplasmopsis pulmonis (strain UAB CTIP) (Mycoplasma pulmonis).